Reading from the N-terminus, the 143-residue chain is Large ribosomal subunit protein uL11 (143 aa).

This sequence belongs to the universal ribosomal protein uL11 family. As to quaternary structure, part of the ribosomal stalk of the 50S ribosomal subunit. Interacts with L10 and the large rRNA to form the base of the stalk. L10 forms an elongated spine to which L12 dimers bind in a sequential fashion forming a multimeric L10(L12)X complex. In terms of processing, one or more lysine residues are methylated.

Forms part of the ribosomal stalk which helps the ribosome interact with GTP-bound translation factors. This chain is Large ribosomal subunit protein uL11, found in Phenylobacterium zucineum (strain HLK1).